The chain runs to 248 residues: Ubiquinone biosynthesis O-methyltransferase (248 aa).

Arginine 40, glycine 71, aspartate 92, and methionine 135 together coordinate S-adenosyl-L-methionine.

It belongs to the methyltransferase superfamily. UbiG/COQ3 family.

The enzyme catalyses a 3-demethylubiquinol + S-adenosyl-L-methionine = a ubiquinol + S-adenosyl-L-homocysteine + H(+). It carries out the reaction a 3-(all-trans-polyprenyl)benzene-1,2-diol + S-adenosyl-L-methionine = a 2-methoxy-6-(all-trans-polyprenyl)phenol + S-adenosyl-L-homocysteine + H(+). Its pathway is cofactor biosynthesis; ubiquinone biosynthesis. Functionally, O-methyltransferase that catalyzes the 2 O-methylation steps in the ubiquinone biosynthetic pathway. This Dinoroseobacter shibae (strain DSM 16493 / NCIMB 14021 / DFL 12) protein is Ubiquinone biosynthesis O-methyltransferase.